The chain runs to 172 residues: 3-hydroxydecanoyl-[acyl-carrier-protein] dehydratase (172 aa).

Residue His71 is part of the active site.

It belongs to the thioester dehydratase family. FabA subfamily. Homodimer.

Its subcellular location is the cytoplasm. It carries out the reaction a (3R)-hydroxyacyl-[ACP] = a (2E)-enoyl-[ACP] + H2O. The enzyme catalyses (3R)-hydroxydecanoyl-[ACP] = (2E)-decenoyl-[ACP] + H2O. It catalyses the reaction (2E)-decenoyl-[ACP] = (3Z)-decenoyl-[ACP]. It participates in lipid metabolism; fatty acid biosynthesis. Functionally, necessary for the introduction of cis unsaturation into fatty acids. Catalyzes the dehydration of (3R)-3-hydroxydecanoyl-ACP to E-(2)-decenoyl-ACP and then its isomerization to Z-(3)-decenoyl-ACP. Can catalyze the dehydratase reaction for beta-hydroxyacyl-ACPs with saturated chain lengths up to 16:0, being most active on intermediate chain length. This Maricaulis maris (strain MCS10) (Caulobacter maris) protein is 3-hydroxydecanoyl-[acyl-carrier-protein] dehydratase.